The following is a 598-amino-acid chain: MSESNKAIRQPIISVLGHVDHGKTTLLDKIRGTAVAAKEAGGITQHIGASEIPLEVVKEICGPLLEQLDVEITIPGLLFIDTPGHEAFTNLRRRGGALADIAILVIDIMEGVMPQTEEALRILRRYRTPFVVAANKVDRVPGWKSHEDTPFLESFQKQSPEVQQRLEEKVYELIGQLHQHGFQAERFDRVRDFTRTVAIVPTSGVTGEGIPELLMVVTGLAQRFLEEQLKIEVEGPGKAAILEVKEEPGLGHTVDAILYDGIIRTGDTIVIGHPEEPIVTRVRSLLKPKPLDEMRDPSDRFRKVDEVTAAAGVKISAPELEEAVAGAPLRVVGEDEDVEEVVREVQEEVEEVTIETDQEGIIIKADTLGTLEAVVGEFKEKDVPIRKADVGDITKKDVIEAHAVAEKDPLLGVIVGFNVGVTEEARELADEYDVDIIIDDVIYELVEKYEEMVEKRIERERRKRLDELVRPGKIKVLPGYIFRQSKPAIVGVQVLAGVIKPGYPLMREDGRELGEIKQIQMHGEPIKEAKKGQEVAISIEGPIVGRHFEEGDILYTDVPSEHAKLMFEEFKDLLTEDELEALKEIAEIKRKEDPFYGM.

The tr-type G domain maps to 8-226; sequence IRQPIISVLG…VTGLAQRFLE (219 aa). The segment at 17-24 is G1; the sequence is GHVDHGKT. Residue 17–24 coordinates GTP; the sequence is GHVDHGKT. The interval 42–46 is G2; sequence GITQH. The tract at residues 81-84 is G3; it reads DTPG. Residues 81–85 and 135–138 contribute to the GTP site; these read DTPGH and NKVD. Residues 135-138 are G4; that stretch reads NKVD. Residues 203-205 are G5; that stretch reads SGV.

The protein belongs to the TRAFAC class translation factor GTPase superfamily. Classic translation factor GTPase family. IF-2 subfamily.

Function in general translation initiation by promoting the binding of the formylmethionine-tRNA to ribosomes. Seems to function along with eIF-2. This Methanopyrus kandleri (strain AV19 / DSM 6324 / JCM 9639 / NBRC 100938) protein is Probable translation initiation factor IF-2.